The primary structure comprises 82 residues: Cytochrome b559 subunit alpha (82 aa).

The chain crosses the membrane as a helical span at residues 22–36 (VIHFVTLPSIFLAGF). His24 serves as a coordination point for heme.

Belongs to the PsbE/PsbF family. In terms of assembly, heterodimer of an alpha subunit and a beta subunit. PSII is composed of 1 copy each of membrane proteins PsbA, PsbB, PsbC, PsbD, PsbE, PsbF, PsbH, PsbI, PsbJ, PsbK, PsbL, PsbM, PsbT, PsbX, PsbY, PsbZ, Psb30/Ycf12, peripheral proteins PsbO, CyanoQ (PsbQ), PsbU, PsbV and a large number of cofactors. It forms dimeric complexes. The cofactor is heme b.

It localises to the cellular thylakoid membrane. Functionally, this b-type cytochrome is tightly associated with the reaction center of photosystem II (PSII). PSII is a light-driven water:plastoquinone oxidoreductase that uses light energy to abstract electrons from H(2)O, generating O(2) and a proton gradient subsequently used for ATP formation. It consists of a core antenna complex that captures photons, and an electron transfer chain that converts photonic excitation into a charge separation. This is Cytochrome b559 subunit alpha from Parasynechococcus marenigrum (strain WH8102).